A 297-amino-acid polypeptide reads, in one-letter code: Acetylglutamate kinase (297 aa).

Residues 73 to 74, arginine 95, and asparagine 188 each bind substrate; that span reads GG.

Belongs to the acetylglutamate kinase family. ArgB subfamily.

It is found in the cytoplasm. The catalysed reaction is N-acetyl-L-glutamate + ATP = N-acetyl-L-glutamyl 5-phosphate + ADP. The protein operates within amino-acid biosynthesis; L-arginine biosynthesis; N(2)-acetyl-L-ornithine from L-glutamate: step 2/4. Functionally, catalyzes the ATP-dependent phosphorylation of N-acetyl-L-glutamate. In Nostoc sp. (strain PCC 7120 / SAG 25.82 / UTEX 2576), this protein is Acetylglutamate kinase.